The following is a 182-amino-acid chain: Adenine phosphoribosyltransferase (182 aa).

The protein belongs to the purine/pyrimidine phosphoribosyltransferase family. Homodimer.

The protein localises to the cytoplasm. The enzyme catalyses AMP + diphosphate = 5-phospho-alpha-D-ribose 1-diphosphate + adenine. It functions in the pathway purine metabolism; AMP biosynthesis via salvage pathway; AMP from adenine: step 1/1. In terms of biological role, catalyzes a salvage reaction resulting in the formation of AMP, that is energically less costly than de novo synthesis. The protein is Adenine phosphoribosyltransferase of Sulfurimonas denitrificans (strain ATCC 33889 / DSM 1251) (Thiomicrospira denitrificans (strain ATCC 33889 / DSM 1251)).